The primary structure comprises 237 residues: Indole-3-glycerol phosphate synthase (237 aa).

The protein belongs to the TrpC family.

The catalysed reaction is 1-(2-carboxyphenylamino)-1-deoxy-D-ribulose 5-phosphate + H(+) = (1S,2R)-1-C-(indol-3-yl)glycerol 3-phosphate + CO2 + H2O. The protein operates within amino-acid biosynthesis; L-tryptophan biosynthesis; L-tryptophan from chorismate: step 4/5. This is Indole-3-glycerol phosphate synthase from Thermoplasma volcanium (strain ATCC 51530 / DSM 4299 / JCM 9571 / NBRC 15438 / GSS1).